The following is a 642-amino-acid chain: Threonine--tRNA ligase (642 aa).

The TGS domain occupies 1 to 61; that stretch reads MPVITLPDGS…DTDSELSIIT (61 aa). A catalytic region spans residues 243 to 534; the sequence is DHRKIGKQLD…LIEEYAGKFP (292 aa). 3 residues coordinate Zn(2+): Cys-334, His-385, and His-511.

Belongs to the class-II aminoacyl-tRNA synthetase family. In terms of assembly, homodimer. The cofactor is Zn(2+).

It is found in the cytoplasm. It carries out the reaction tRNA(Thr) + L-threonine + ATP = L-threonyl-tRNA(Thr) + AMP + diphosphate + H(+). Its function is as follows. Catalyzes the attachment of threonine to tRNA(Thr) in a two-step reaction: L-threonine is first activated by ATP to form Thr-AMP and then transferred to the acceptor end of tRNA(Thr). Also edits incorrectly charged L-seryl-tRNA(Thr). The protein is Threonine--tRNA ligase of Shewanella woodyi (strain ATCC 51908 / MS32).